A 319-amino-acid chain; its full sequence is tRNA uridine(34) hydroxylase (319 aa).

A Rhodanese domain is found at 133 to 231 (EDPDSVVIDT…YLEDVSSENS (99 aa)). The active-site Cysteine persulfide intermediate is the cysteine 191.

Belongs to the TrhO family.

It catalyses the reaction uridine(34) in tRNA + AH2 + O2 = 5-hydroxyuridine(34) in tRNA + A + H2O. Functionally, catalyzes oxygen-dependent 5-hydroxyuridine (ho5U) modification at position 34 in tRNAs. The protein is tRNA uridine(34) hydroxylase of Prochlorococcus marinus (strain NATL1A).